Reading from the N-terminus, the 53-residue chain is Small ribosomal subunit protein uS14m (53 aa).

This sequence belongs to the universal ribosomal protein uS14 family.

Its subcellular location is the mitochondrion. The polypeptide is Small ribosomal subunit protein uS14m (RPS14) (Bigelowiella natans (Pedinomonas minutissima)).